Here is a 198-residue protein sequence, read N- to C-terminus: Probable nicotinate-nucleotide adenylyltransferase (198 aa).

Belongs to the NadD family.

The enzyme catalyses nicotinate beta-D-ribonucleotide + ATP + H(+) = deamido-NAD(+) + diphosphate. The protein operates within cofactor biosynthesis; NAD(+) biosynthesis; deamido-NAD(+) from nicotinate D-ribonucleotide: step 1/1. Catalyzes the reversible adenylation of nicotinate mononucleotide (NaMN) to nicotinic acid adenine dinucleotide (NaAD). The polypeptide is Probable nicotinate-nucleotide adenylyltransferase (Herpetosiphon aurantiacus (strain ATCC 23779 / DSM 785 / 114-95)).